Reading from the N-terminus, the 243-residue chain is Probable 2-phosphosulfolactate phosphatase (243 aa).

Belongs to the ComB family. Requires Mg(2+) as cofactor.

It catalyses the reaction (2R)-O-phospho-3-sulfolactate + H2O = (2R)-3-sulfolactate + phosphate. The chain is Probable 2-phosphosulfolactate phosphatase from Prochlorococcus marinus (strain MIT 9313).